We begin with the raw amino-acid sequence, 634 residues long: RNA polymerase sigma factor RpoD (634 aa).

Residues 177–202 (LHDETPENDEENSSETEGEEHEDNHL) form a disordered region. The segment covering 182-197 (PENDEENSSETEGEEH) has biased composition (acidic residues). A sigma-70 factor domain-2 region spans residues 385-455 (MIEANLRLVI…TRAIADQART (71 aa)). The short motif at 409–412 (DLIQ) is the Interaction with polymerase core subunit RpoC element. Residues 464-541 (ETINKILRTS…DKNAVAPIDA (78 aa)) form a sigma-70 factor domain-3 region. The sigma-70 factor domain-4 stretch occupies residues 554–607 (VLATLTPREERVLRMRFGIGMNTDHTLEEVGQQFKVTRERIRQIESKALRKLQH). Positions 580 to 599 (LEEVGQQFKVTRERIRQIES) form a DNA-binding region, H-T-H motif. The tract at residues 608 to 634 (PIRSKKLNSFRSGGKRGDGNSSDLLEA) is disordered.

It belongs to the sigma-70 factor family. RpoD/SigA subfamily. As to quaternary structure, interacts transiently with the RNA polymerase catalytic core.

Its subcellular location is the cytoplasm. Sigma factors are initiation factors that promote the attachment of RNA polymerase to specific initiation sites and are then released. This sigma factor is the primary sigma factor during exponential growth. This chain is RNA polymerase sigma factor RpoD, found in Rickettsia conorii (strain ATCC VR-613 / Malish 7).